The sequence spans 351 residues: Large ribosomal subunit protein uL3 (351 aa).

Disordered regions lie at residues 1–31 and 246–271; these read MGHR…TPRT and KGSR…GQLG.

Belongs to the universal ribosomal protein uL3 family. Part of the 50S ribosomal subunit. Forms a cluster with proteins L14 and L24e.

One of the primary rRNA binding proteins, it binds directly near the 3'-end of the 23S rRNA, where it nucleates assembly of the 50S subunit. The polypeptide is Large ribosomal subunit protein uL3 (Saccharolobus islandicus (strain M.14.25 / Kamchatka #1) (Sulfolobus islandicus)).